A 405-amino-acid polypeptide reads, in one-letter code: NAC transcription factor NAM-A1 (405 aa).

Over residues 1-10 (MGSSDSSSGS) the composition is skewed to low complexity. Residues 1–38 (MGSSDSSSGSAQKAARHQHEPPPPRQRGSAPELPPGFR) are disordered. One can recognise an NAC domain in the interval 33–204 (LPPGFRFHPT…DWVLCRIYKK (172 aa)). The DNA-binding element occupies 137-210 (LGVKKALVFY…IYKKINKAAA (74 aa)).

Expressed in flag leaves, green spikes and peduncles.

It localises to the nucleus. Its function is as follows. Transcription factor of the NAC family associated with the grain protein content (GPC). Accelerates senescence and increases nutrient remobilization from leaves to developing grains. The tetraploid cultivated wheat (T.durum) contains one additional gene coding for a functional protein (NAM-B2) and one extra pseudogene (NAM-B1). This Triticum turgidum subsp. durum (Durum wheat) protein is NAC transcription factor NAM-A1 (NAM-A1).